The following is a 24-amino-acid chain: Aldehyde dehydrogenase gamma chain (24 aa).

In terms of assembly, heterotrimer composed of an alpha, a beta and a gamma chain. The cofactor is [2Fe-2S] cluster.

The catalysed reaction is an aldehyde + a quinone + H2O = a quinol + a carboxylate + H(+). The protein is Aldehyde dehydrogenase gamma chain of Comamonas testosteroni (Pseudomonas testosteroni).